The chain runs to 121 residues: Protein YxiB (121 aa).

This chain is Protein YxiB (yxiB), found in Bacillus subtilis (strain 168).